The chain runs to 164 residues: 2-C-methyl-D-erythritol 2,4-cyclodiphosphate synthase (164 aa).

Residues aspartate 8 and histidine 10 each contribute to the a divalent metal cation site. 4-CDP-2-C-methyl-D-erythritol 2-phosphate is bound by residues 8-10 and 34-35; these read DVH and HS. Residue histidine 42 participates in a divalent metal cation binding. 4-CDP-2-C-methyl-D-erythritol 2-phosphate-binding positions include 56 to 58, 132 to 135, phenylalanine 139, and lysine 142; these read DIG and TTEE.

Belongs to the IspF family. Homotrimer. The cofactor is a divalent metal cation.

The enzyme catalyses 4-CDP-2-C-methyl-D-erythritol 2-phosphate = 2-C-methyl-D-erythritol 2,4-cyclic diphosphate + CMP. Its pathway is isoprenoid biosynthesis; isopentenyl diphosphate biosynthesis via DXP pathway; isopentenyl diphosphate from 1-deoxy-D-xylulose 5-phosphate: step 4/6. Its function is as follows. Involved in the biosynthesis of isopentenyl diphosphate (IPP) and dimethylallyl diphosphate (DMAPP), two major building blocks of isoprenoid compounds. Catalyzes the conversion of 4-diphosphocytidyl-2-C-methyl-D-erythritol 2-phosphate (CDP-ME2P) to 2-C-methyl-D-erythritol 2,4-cyclodiphosphate (ME-CPP) with a corresponding release of cytidine 5-monophosphate (CMP). The polypeptide is 2-C-methyl-D-erythritol 2,4-cyclodiphosphate synthase (Clostridium kluyveri (strain NBRC 12016)).